Reading from the N-terminus, the 189-residue chain is Large ribosomal subunit protein uL5 (189 aa).

This sequence belongs to the universal ribosomal protein uL5 family. Part of the 50S ribosomal subunit; part of the 5S rRNA/L5/L18/L25 subcomplex. Contacts the 5S rRNA and the P site tRNA. Forms a bridge to the 30S subunit in the 70S ribosome.

This is one of the proteins that bind and probably mediate the attachment of the 5S RNA into the large ribosomal subunit, where it forms part of the central protuberance. In the 70S ribosome it contacts protein S13 of the 30S subunit (bridge B1b), connecting the 2 subunits; this bridge is implicated in subunit movement. Contacts the P site tRNA; the 5S rRNA and some of its associated proteins might help stabilize positioning of ribosome-bound tRNAs. In Parafrankia sp. (strain EAN1pec), this protein is Large ribosomal subunit protein uL5.